Consider the following 145-residue polypeptide: Brain and acute leukemia cytoplasmic protein (145 aa).

Residue G2 is the site of N-myristoyl glycine attachment. C3 carries S-palmitoyl cysteine lipidation. Residues C3–A35 are interaction with CAMK2A. Residues W27–A119 are disordered. Over residues D32–P46 the composition is skewed to low complexity. Over residues C83–T108 the composition is skewed to polar residues. Basic and acidic residues predominate over residues E109 to A119.

Interacts with CAMK2A. Post-translationally, palmitoylation and myristoylation target the protein to the lipid rafts. In terms of tissue distribution, predominantly expressed in neuroectoderm-derived tissues. Expressed in the brain and spinal cord, and at low levels, in the adrenal gland. In the bone marrow, confined to the CD34+ progenitor cells. Not found in peripheral blood mononuclear cells, nor lymph nodes. Tends to be expressed at high levels in acute myeloid leukemia and glioblastoma cells.

It localises to the cytoplasm. It is found in the synapse. The protein localises to the synaptosome. The protein resides in the membrane raft. Its subcellular location is the postsynaptic density. Functionally, may play a synaptic role at the postsynaptic lipid rafts possibly through interaction with CAMK2A. This Homo sapiens (Human) protein is Brain and acute leukemia cytoplasmic protein.